We begin with the raw amino-acid sequence, 1115 residues long: Disheveled-associated activator of morphogenesis 2 (1115 aa).

A GBD/FH3 domain is found at 40-416 (GPIPNPEELN…QIVLQDERGV (377 aa)). Positions 434-515 (MLINENEVKQ…ELVARHNESS (82 aa)) form a coiled coil. 2 disordered regions span residues 510–605 (RHNE…SHPL) and 655–697 (QEGP…SATG). Residues 518-694 (PVSSPPPPGG…TEKASRSMVS (177 aa)) form the FH1 domain. Residues 540–583 (LPPPPPPLPFDSCPPPPAPPLPPGGPPIPPGAPPCFSSGPPPSH) are compositionally biased toward pro residues. In terms of domain architecture, FH2 spans 595–1042 (KKRIPQPSHP…DERRARMEFM (448 aa)). Residues 1065-1095 (EESGEFDDLVSALRSGEVFDKDLSKFKRNRK) form the DAD domain.

It belongs to the formin homology family. Interacts with DVL3. Interacts with INF2. In early embryogenesis, expression is confined to embryonic ectoderm. Highly dynamic expression in later stages of gastrulation. In early somite stages, detected in posterior node and persists until 9-10 somites have developed when expression is concentrated in the chordoneural hinge. During organogenesis, expressed in the CNS, PNS, liver primordia, limb buds and genital tubercle.

Functionally, key regulator of the Wnt signaling pathway, which is required for various processes during development, such as dorsal patterning, determination of left/right symmetry or myelination in the central nervous system. Acts downstream of Wnt ligands and upstream of beta-catenin (CTNNB1). Required for canonical Wnt signaling pathway during patterning in the dorsal spinal cord by promoting the aggregation of Disheveled (Dvl) complexes, thereby clustering and formation of Wnt receptor signalosomes and potentiating Wnt activity. During dorsal patterning of the spinal cord, inhibits oligodendrocytes differentiation via interaction with PIP5K1A. Also regulates non-canonical Wnt signaling pathway. Acts downstream of PITX2 in the developing gut and is required for left/right asymmetry within dorsal mesentery: affects mesenchymal condensation by lengthening cadherin-based junctions through WNT5A and non-canonical Wnt signaling, inducing polarized condensation in the left dorsal mesentery necessary to initiate gut rotation. Together with DAAM1, required for myocardial maturation and sarcomere assembly. Is a regulator of actin nucleation and elongation, filopodia formation and podocyte migration. The protein is Disheveled-associated activator of morphogenesis 2 of Mus musculus (Mouse).